The primary structure comprises 104 residues: Histone-like protein p6 (104 aa).

The DNA-binding element occupies 1–19 (MAKMMQREITKTTVNVAKM). Residues 85 to 104 (VEKDEDQEEQTEAPEEQVAE) are disordered. The span at 88 to 104 (DEDQEEQTEAPEEQVAE) shows a compositional bias: acidic residues.

Belongs to the phi29likevirus histone-like protein p6 family. In terms of assembly, homodimer. Homomultimer. Binds to double-stranded DNA giving rise to multimeric nucleoprotein complexes. Binding specificity for the viral DNA is based on supercoiling, the viral genome having a negative superhelicity lower than that of plasmid DNA. Interacts with the DNA replication protein p17; this interaction optimizes the binding of protein p6 at the viral DNA ends, thus favoring the initiation of replication. Interacts with the late genes activator p4 (via C-terminus).

Histone-like nucleoprotein that binds to the viral dsDNA and responsible for wrapping and compacting the viral DNA about 4-fold. Forms a nucleoprotein complex in which the DNA adopts a right-handed toroidal conformation winding around a protein core. Binds ito most, if not all, the viral genome, although with different affinity, the highest one corresponding to the genome ends. The formation of the nucleoprotein complex at the genome ends, activates the initiation of viral DNA replication. The binding of p6 would recruit the complex formed by the TP and the DNA polymerase to the origin. Protein p6 also represses early transcription from promoter C2, and, together with protein p4, represses transcription from promoters A2b and A2c and activates late transcription from promoter A3. Protein p6 is therefore involved in the early to late transcription switch. The formation of the nucleoprotein complex at the right end of the phage genome where the early promoter C2 is located affects local topology, which may contribute to the promoter repression. In Bacillus subtilis (Bacteriophage phi-29), this protein is Histone-like protein p6 (6).